Reading from the N-terminus, the 260-residue chain is MLDKVKNVIVVLSGKGGVGKSTVSTQLSLALRKNGFKVGLLDIDLCGPSVPYLLGLEGRDIFQCDDGWVPVYTDESQTLAVMSIGFLLKNREDPVIWRGPKKTMMIRQFLTDVRWDELDYLIIDTPPGTSDEHITVMECLKEVGCHGAIIVTTPQEVALDDVRKEITFCKKTGINILGIVENMSGFVCPHCTSCTNIFSSNGGVSLATYAQVPHLGTLPIDPRVGILAGTTTSVLDELPDSTTAEVLTHIVEKLKTMLVS.

14–21 (GKGGVGKS) is an ATP binding site. Residues cysteine 188 and cysteine 191 each coordinate [4Fe-4S] cluster.

It belongs to the Mrp/NBP35 ATP-binding proteins family. NUBP2/CFD1 subfamily. Heterotetramer of 2 Nubp1 and 2 Nubp2 chains. [4Fe-4S] cluster is required as a cofactor.

The protein resides in the cytoplasm. Component of the cytosolic iron-sulfur (Fe/S) protein assembly (CIA) machinery. Required for maturation of extramitochondrial Fe-S proteins. The Nubp1-Nubp2 heterotetramer forms a Fe-S scaffold complex, mediating the de novo assembly of an Fe-S cluster and its transfer to target apoproteins. In Drosophila melanogaster (Fruit fly), this protein is Cytosolic Fe-S cluster assembly factor Nubp2 homolog.